The primary structure comprises 162 residues: Colicin V production protein (162 aa).

A helical transmembrane segment spans residues Met1 to Ile21. Over Arg22–Leu31 the chain is Cytoplasmic. Residues Val32 to Phe52 form a helical membrane-spanning segment. Residues Thr53–Gly63 are Periplasmic-facing. The helical transmembrane segment at Ile64–Ile84 threads the bilayer. Residues Gly85–Arg98 lie on the Cytoplasmic side of the membrane. A helical transmembrane segment spans residues Val99–Phe119. At Leu120–Ala162 the chain is on the periplasmic side.

It is found in the cell inner membrane. Its function is as follows. Required for colicin V production from plasmid IncFI ColV3-K30. The polypeptide is Colicin V production protein (cvpA) (Escherichia coli (strain K12)).